The following is a 222-amino-acid chain: Ribose-5-phosphate isomerase A (222 aa).

Residues 29 to 32 (TGST), 82 to 85 (DSAD), and 95 to 98 (KGGG) each bind substrate. Catalysis depends on glutamate 104, which acts as the Proton acceptor. Lysine 122 is a binding site for substrate.

This sequence belongs to the ribose 5-phosphate isomerase family. As to quaternary structure, homodimer.

The enzyme catalyses aldehydo-D-ribose 5-phosphate = D-ribulose 5-phosphate. Its pathway is carbohydrate degradation; pentose phosphate pathway; D-ribose 5-phosphate from D-ribulose 5-phosphate (non-oxidative stage): step 1/1. In terms of biological role, catalyzes the reversible conversion of ribose-5-phosphate to ribulose 5-phosphate. The chain is Ribose-5-phosphate isomerase A from Blochmanniella floridana.